The following is a 180-amino-acid chain: Cell division protein ZapC (180 aa).

The protein belongs to the ZapC family. Interacts directly with FtsZ.

It localises to the cytoplasm. Contributes to the efficiency of the cell division process by stabilizing the polymeric form of the cell division protein FtsZ. Acts by promoting interactions between FtsZ protofilaments and suppressing the GTPase activity of FtsZ. This Vibrio vulnificus (strain CMCP6) protein is Cell division protein ZapC.